Reading from the N-terminus, the 424-residue chain is Protein CLP1 homolog (424 aa).

Residues glutamate 19, lysine 60, and 122–127 (DVGKST) each bind ATP.

Belongs to the Clp1 family. Clp1 subfamily.

It localises to the nucleus. Functionally, required for endonucleolytic cleavage during polyadenylation-dependent pre-mRNA 3'-end formation. The chain is Protein CLP1 homolog (cbc) from Aedes aegypti (Yellowfever mosquito).